A 141-amino-acid polypeptide reads, in one-letter code: Hemoglobin subunit alpha (141 aa).

The region spanning 1 to 141 (VLSPADKTNI…VSTVLTSKYR (141 aa)) is the Globin domain. S3 bears the Phosphoserine mark. K7 carries the N6-succinyllysine modification. T8 carries the post-translational modification Phosphothreonine. K11 carries the post-translational modification N6-succinyllysine. An N6-acetyllysine; alternate modification is found at K16. The residue at position 16 (K16) is an N6-succinyllysine; alternate. Phosphotyrosine is present on Y24. At S35 the chain carries Phosphoserine. K40 is modified (N6-succinyllysine). S49 is modified (phosphoserine). O2 is bound at residue H58. Residue H87 coordinates heme b. Position 102 is a phosphoserine (S102). T108 carries the post-translational modification Phosphothreonine. Position 124 is a phosphoserine (S124). A phosphothreonine mark is found at T134 and T137. Phosphoserine is present on S138.

It belongs to the globin family. Heterotetramer of two alpha chains and two beta chains. As to expression, red blood cells.

Its function is as follows. Involved in oxygen transport from the lung to the various peripheral tissues. Hemopressin acts as an antagonist peptide of the cannabinoid receptor CNR1. Hemopressin-binding efficiently blocks cannabinoid receptor CNR1 and subsequent signaling. This is Hemoglobin subunit alpha (HBA) from Canis lupus familiaris (Dog).